Consider the following 198-residue polypeptide: MSNTKTASTGFAELLKDRREQVKMDHAALASLLGETPETVAAWENGEGGELTLTQLGRIAHVLGTSIGALTPPAGNDLDDGVIIQMPDERPILKGVRDNVDYYVYNCLVRTKRAPSLVPLVVDVLTDNPDDAKFNSGHAGNEFLFVLEGEIHMKWGDKENPKEALLPTGASMFVEEHVPHAFTAAKGTGSAKLIAVNF.

The HTH cro/C1-type domain occupies 15–70; the sequence is LKDRREQVKMDHAALASLLGETPETVAAWENGEGGELTLTQLGRIAHVLGTSIGAL. Residue Lys23 participates in substrate binding. The segment at residues 26–45 is a DNA-binding region (H-T-H motif); sequence HAALASLLGETPETVAAWEN. Substrate contacts are provided by residues Arg97, Tyr105, 135–138, and Glu142; that span reads NSGH. A Cupin type-2 domain is found at 136 to 196; that stretch reads SGHAGNEFLF…GTGSAKLIAV (61 aa). Fe cation-binding residues include His138, Glu142, and His180.

The protein belongs to the non-heme iron-dependent dioxygenase family. As to quaternary structure, homotetramer. Requires Fe(2+) as cofactor.

It catalyses the reaction (S)-2-hydroxypropylphosphonate + H2O2 = (1R,2S)-epoxypropylphosphonate + 2 H2O. It participates in antibiotic biosynthesis; fosfomycin biosynthesis. Its function is as follows. Non-heme-dependent dioxygenase that catalyzes the oxidative epoxidation of (S)-2-hydroxypropylphosphonate into (1R,2S)-epoxypropylphosphonate, the final step in the biosynthesis of fosfomycin antibiotic. In Streptomyces wedmorensis, this protein is (S)-2-hydroxypropylphosphonic acid epoxidase (hppE).